Reading from the N-terminus, the 359-residue chain is Ornithine cyclodeaminase (359 aa).

2 residues coordinate L-ornithine: R53 and K77. NAD(+) is bound by residues T92, R120, 147-148 (AQ), D169, T209, 232-235 (VGGD), K239, and S300. R120 is an L-ornithine binding site. L-ornithine is bound at residue D235. The active-site Proton donor/acceptor is the D235. V301 is a binding site for L-ornithine.

It belongs to the ornithine cyclodeaminase/mu-crystallin family. It depends on NAD(+) as a cofactor.

It catalyses the reaction L-ornithine = L-proline + NH4(+). The protein operates within amino-acid biosynthesis; L-proline biosynthesis; L-proline from L-ornithine: step 1/1. Catalyzes the conversion of L-ornithine into L-proline with release of ammonia. The chain is Ornithine cyclodeaminase from Brucella abortus biovar 1 (strain 9-941).